A 359-amino-acid polypeptide reads, in one-letter code: NADH-quinone oxidoreductase subunit H (359 aa).

Transmembrane regions (helical) follow at residues 16-36 (IWPA…CVLL), 94-114 (GLFV…WAVI), 129-149 (LLFL…AGWA), 167-187 (VSYE…SASL), 208-228 (FLSW…ISGL), 261-281 (FFLA…ILFL), 296-316 (IPGW…FLWV), and 331-351 (LGWK…GAWM).

It belongs to the complex I subunit 1 family. NDH-1 is composed of 14 different subunits. Subunits NuoA, H, J, K, L, M, N constitute the membrane sector of the complex.

The protein localises to the cell inner membrane. It catalyses the reaction a quinone + NADH + 5 H(+)(in) = a quinol + NAD(+) + 4 H(+)(out). NDH-1 shuttles electrons from NADH, via FMN and iron-sulfur (Fe-S) centers, to quinones in the respiratory chain. The immediate electron acceptor for the enzyme in this species is believed to be ubiquinone. Couples the redox reaction to proton translocation (for every two electrons transferred, four hydrogen ions are translocated across the cytoplasmic membrane), and thus conserves the redox energy in a proton gradient. This subunit may bind ubiquinone. This chain is NADH-quinone oxidoreductase subunit H, found in Polaromonas sp. (strain JS666 / ATCC BAA-500).